Here is a 590-residue protein sequence, read N- to C-terminus: Putative sodium/calcium exchanger 6 (590 aa).

Positions 1–19 (MRIHFFAFLIILSLVGCDG) are cleaved as a signal peptide. 11 helical membrane-spanning segments follow: residues 97 to 117 (IILI…VSSA), 139 to 159 (VAGV…GAIA), 173 to 193 (LGEL…VTIF), 208 to 228 (IAFY…YDHV), 230 to 250 (IWMP…VILS), 368 to 388 (PITL…IQVC), 397 to 417 (PGLW…VLFF), 440 to 460 (IAWI…LGVV), 499 to 519 (AAAI…PFTI), 535 to 555 (YRLL…AMFA), and 568 to 588 (LVFI…DILV).

Belongs to the Ca(2+):cation antiporter (CaCA) (TC 2.A.19) family.

The protein resides in the membrane. The chain is Putative sodium/calcium exchanger 6 (ncx-6) from Caenorhabditis elegans.